Reading from the N-terminus, the 270-residue chain is Mlc titration factor A (270 aa).

Zn(2+) contacts are provided by His-111, His-148, His-152, and Glu-211.

It belongs to the MtfA family. Interacts with Mlc. It depends on Zn(2+) as a cofactor.

It is found in the cytoplasm. Involved in the modulation of the activity of the glucose-phosphotransferase system (glucose-PTS). Interacts with the transcriptional repressor Mlc, preventing its interaction with DNA and leading to the modulation of expression of genes regulated by Mlc, including ptsG, which encodes the PTS system glucose-specific EIICB component. Functionally, shows zinc-dependent metallopeptidase activity. This Yersinia pestis bv. Antiqua (strain Nepal516) protein is Mlc titration factor A.